Consider the following 283-residue polypeptide: MKLAAPNPQALAPLPIDVVSIQSQVVYGQVGNSVAVPVFNGFGLRVAAVPTVVLSNTPHYPSMHGGAVPLDWFEGYLADLGARGALAGVRVVQLGYLGGPAQAEALGRWIAGLVAVRPDLRVHIDPVIGDHDSGVYVAPGMVAAYRDHLLPLAQGLTPNGFELECLTGLPTGTMEQTIAAARTLLGGRARWVIVTSAAPATWPPGRVRVAVVTHDDAQVLEHAHVDTAPKGTGDMFGAALTGHLLAGQPVAEAARRAALQVIEALERTREAGCGELLLAGPLR.

Residues S23 and H59 each contribute to the substrate site. D125 contributes to the ATP binding site. Y136 contributes to the Mg(2+) binding site. Residues T157, E162, T195, 222–225 (HAHV), and T232 contribute to the ATP site. E162 provides a ligand contact to Mg(2+). D234 serves as a coordination point for substrate.

It belongs to the pyridoxine kinase family. PdxK subfamily. In terms of assembly, homodimer. Mg(2+) is required as a cofactor.

It catalyses the reaction pyridoxal + ATP = pyridoxal 5'-phosphate + ADP + H(+). The catalysed reaction is pyridoxine + ATP = pyridoxine 5'-phosphate + ADP + H(+). It carries out the reaction pyridoxamine + ATP = pyridoxamine 5'-phosphate + ADP + H(+). Its pathway is cofactor metabolism; pyridoxal 5'-phosphate salvage; pyridoxal 5'-phosphate from pyridoxal: step 1/1. It participates in cofactor metabolism; pyridoxal 5'-phosphate salvage; pyridoxine 5'-phosphate from pyridoxine: step 1/1. It functions in the pathway cofactor metabolism; pyridoxal 5'-phosphate salvage; pyridoxamine 5'-phosphate from pyridoxamine: step 1/1. In terms of biological role, B6-vitamer kinase involved in the salvage pathway of pyridoxal 5'-phosphate (PLP). Catalyzes the phosphorylation of pyridoxine (PN), pyridoxal (PL), and pyridoxamine (PM), forming their respective 5'-phosphorylated esters, i.e. PNP, PLP and PMP. The sequence is that of Pyridoxine/pyridoxal/pyridoxamine kinase from Bordetella bronchiseptica (strain ATCC BAA-588 / NCTC 13252 / RB50) (Alcaligenes bronchisepticus).